The primary structure comprises 310 residues: p-hydroxybenzoic acid efflux pump subunit AaeA (310 aa).

Residues 12-32 (AITLVLVILAFIAIFRAWVYY) traverse the membrane as a helical segment.

The protein belongs to the membrane fusion protein (MFP) (TC 8.A.1) family.

The protein resides in the cell inner membrane. Forms an efflux pump with AaeB. In Salmonella heidelberg (strain SL476), this protein is p-hydroxybenzoic acid efflux pump subunit AaeA.